The sequence spans 310 residues: UPF0324 membrane protein GSU2818 (310 aa).

9 consecutive transmembrane segments (helical) span residues 11 to 33 (FTIL…VMGI), 53 to 72 (MLLQ…GEVI), 79 to 97 (IWYS…YGLG), 107 to 129 (SALI…APVL), 136 to 158 (TAVA…PLVG), 193 to 215 (ALAI…VMAA), 227 to 244 (IPLF…RTLL), 254 to 273 (LAGV…GAGL), and 286 to 308 (LVQA…KLPW).

The protein belongs to the UPF0324 family.

It localises to the cell membrane. The protein is UPF0324 membrane protein GSU2818 of Geobacter sulfurreducens (strain ATCC 51573 / DSM 12127 / PCA).